The following is a 258-amino-acid chain: Imidazole glycerol phosphate synthase subunit HisF (258 aa).

Active-site residues include aspartate 11 and aspartate 130.

It belongs to the HisA/HisF family. Heterodimer of HisH and HisF.

Its subcellular location is the cytoplasm. The catalysed reaction is 5-[(5-phospho-1-deoxy-D-ribulos-1-ylimino)methylamino]-1-(5-phospho-beta-D-ribosyl)imidazole-4-carboxamide + L-glutamine = D-erythro-1-(imidazol-4-yl)glycerol 3-phosphate + 5-amino-1-(5-phospho-beta-D-ribosyl)imidazole-4-carboxamide + L-glutamate + H(+). It participates in amino-acid biosynthesis; L-histidine biosynthesis; L-histidine from 5-phospho-alpha-D-ribose 1-diphosphate: step 5/9. IGPS catalyzes the conversion of PRFAR and glutamine to IGP, AICAR and glutamate. The HisF subunit catalyzes the cyclization activity that produces IGP and AICAR from PRFAR using the ammonia provided by the HisH subunit. The sequence is that of Imidazole glycerol phosphate synthase subunit HisF from Citrobacter koseri (strain ATCC BAA-895 / CDC 4225-83 / SGSC4696).